Here is a 297-residue protein sequence, read N- to C-terminus: MSWIIFYTIIAALLILDLGIIHKKNKVISFKGSILLSLFYFIISCLFGIYVYHNMGLDHAREYYTCFLIEKAMALDNIFIISIIFQFFNIPSTYQHRVLFFGIIGVIIFKAIIIYGGIMLIHKFSWLLYILAVILIATGIKTFNVSHKTYDIQNSYIYKSIIKNLNITHDLEGQKFVIKRNNKLYFSTLFVSLILIETIDLVFAIDSIAAIFAITNDVYIIYTSNIFAILGLRSLFFCLSEIVERFSYIKYSLALILIFIGFKIFIHHYIEIPAYISLTVTISSLLFGIIASILEKI.

9 helical membrane passes run Met-1–Ile-21, Gly-32–Tyr-52, Ala-72–Ser-92, Val-98–Ile-118, Leu-120–Ile-140, Ile-194–Ile-214, Val-218–Cys-238, Leu-253–Pro-273, and Ala-274–Leu-294.

The protein belongs to the TerC family.

It is found in the cell membrane. This is an uncharacterized protein from Rickettsia prowazekii (strain Madrid E).